A 246-amino-acid polypeptide reads, in one-letter code: tRNA pseudouridine synthase A (246 aa).

The active-site Nucleophile is the aspartate 52. Tyrosine 111 is a binding site for substrate.

It belongs to the tRNA pseudouridine synthase TruA family. Homodimer.

It carries out the reaction uridine(38/39/40) in tRNA = pseudouridine(38/39/40) in tRNA. Formation of pseudouridine at positions 38, 39 and 40 in the anticodon stem and loop of transfer RNAs. This chain is tRNA pseudouridine synthase A, found in Fervidobacterium nodosum (strain ATCC 35602 / DSM 5306 / Rt17-B1).